An 898-amino-acid chain; its full sequence is DNA gyrase subunit A (898 aa).

Disordered stretches follow at residues 1-22 and 36-56; these read MSDDKKDEEKLKKSDENFDDDS and EEEKAKEEDEDEEEIPQEKEG. Residues 97-562 enclose the Topo IIA-type catalytic domain; that stretch reads LPDARDGLKP…VMSSINNEDL (466 aa). Tyr-185 acts as the O-(5'-phospho-DNA)-tyrosine intermediate in catalysis. Residues 589–595 carry the GyrA-box motif; the sequence is QRRGGVG.

Belongs to the type II topoisomerase GyrA/ParC subunit family. As to quaternary structure, heterotetramer, composed of two GyrA and two GyrB chains. In the heterotetramer, GyrA contains the active site tyrosine that forms a transient covalent intermediate with DNA, while GyrB binds cofactors and catalyzes ATP hydrolysis.

The protein resides in the cytoplasm. It catalyses the reaction ATP-dependent breakage, passage and rejoining of double-stranded DNA.. Functionally, a type II topoisomerase that negatively supercoils closed circular double-stranded (ds) DNA in an ATP-dependent manner to modulate DNA topology and maintain chromosomes in an underwound state. Negative supercoiling favors strand separation, and DNA replication, transcription, recombination and repair, all of which involve strand separation. Also able to catalyze the interconversion of other topological isomers of dsDNA rings, including catenanes and knotted rings. Type II topoisomerases break and join 2 DNA strands simultaneously in an ATP-dependent manner. In Metamycoplasma arthritidis (strain 158L3-1) (Mycoplasma arthritidis), this protein is DNA gyrase subunit A.